The primary structure comprises 593 residues: MSTEAEPRVLREVVLSQLATGESRAYKMWLPPLTDPTPVNELVERDYQRRPLRFGLGIMDEPRRHRQEVWGVDVSAAGGNIAVGGAPQTGKSTFLQTLVVSAAATHTPRQVQFYCVDLGGGGLMYLEDLPHVGGVATRAEPDRVNRVVAEVKAVLRAREQVFKQYRVGSIASYREMRDDPNNPASQDPFGDVFLVIDGWPAFVAEFPDLEPAVQDIAGQGLAYGVHVIITTPRWTELKSRVRDYLGTKIEFRLGDVNETQIDRITREIPANRPGRAVSLEKHHLMMGVPRLDGVHSADNIVEAISSAVQQIADRHTDQAPQVRVLPERIYLHQLDPNPPGPDSDYRTRWQVPLGVRESDLTVAYNQMHLTPHLLIFGAPKSGKTRIAHAVAQAICKRNSPQQVRFMLADYRSGLLDAVPQSHLLDAGAINRNSATLEEAIKALAVNLKKRLPPPDLTTAQLRARSWWSGPDVVLLVDDWHMVTAAAGMVSPMAPLGPLLPAAADIGLHVIVTCQMSMAHRATMDKFVGAAYGAGSPTLFLSGEKNDFPSRDIIVKKRPPGQAFLVGPDGKEVIQAAYVDPPEEEVFSPPSEGS.

FtsK domains are found at residues 66-260 and 350-546; these read RQEV…NETQ and QVPL…EKND. ATP contacts are provided by residues 85-92 and 377-384; these read GAPQTGKS and GAPKSGKT.

Part of the ESX-1 / type VII secretion system (T7SS), which is composed of cytosolic and membrane components. The ESX-1 membrane complex is composed of EccB1, EccCa1, EccCb1, EccD1 and EccE1.

It localises to the cytoplasm. Its function is as follows. Part of the ESX-1 / type VII specialized secretion system (T7SS), which exports several proteins including EsxA and EsxB. Plays a role in DNA conjugation, in both donor and recipient strains. In Mycolicibacterium smegmatis (strain ATCC 700084 / mc(2)155) (Mycobacterium smegmatis), this protein is ESX-1 secretion system protein EccCb1.